Reading from the N-terminus, the 645-residue chain is 1,4-alpha-glucan branching enzyme GlgB (645 aa).

Asp-309 serves as the catalytic Nucleophile. The active-site Proton donor is Glu-352. Residues 619-645 (VKTRKGSKKQDGSKTKVRSNVTSRGKR) form a disordered region. The segment covering 636–645 (RSNVTSRGKR) has biased composition (polar residues).

The protein belongs to the glycosyl hydrolase 13 family. GlgB subfamily. Monomer.

It catalyses the reaction Transfers a segment of a (1-&gt;4)-alpha-D-glucan chain to a primary hydroxy group in a similar glucan chain.. It functions in the pathway glycan biosynthesis; glycogen biosynthesis. Catalyzes the formation of the alpha-1,6-glucosidic linkages in glycogen by scission of a 1,4-alpha-linked oligosaccharide from growing alpha-1,4-glucan chains and the subsequent attachment of the oligosaccharide to the alpha-1,6 position. This Bacillus cereus (strain ATCC 14579 / DSM 31 / CCUG 7414 / JCM 2152 / NBRC 15305 / NCIMB 9373 / NCTC 2599 / NRRL B-3711) protein is 1,4-alpha-glucan branching enzyme GlgB.